The primary structure comprises 652 residues: Acetyl-coenzyme A synthetase (652 aa).

CoA-binding positions include 193–196 (RRGK) and T312. Residues 388 to 390 (GEP), 412 to 417 (DTWWQT), D501, and R516 each bind ATP. Residue S524 coordinates CoA. Residues V538, H540, and V543 each contribute to the Mg(2+) site. K611 bears the N6-acetyllysine mark.

The protein belongs to the ATP-dependent AMP-binding enzyme family. It depends on Mg(2+) as a cofactor. Post-translationally, acetylated. Deacetylation by the SIR2-homolog deacetylase activates the enzyme.

The enzyme catalyses acetate + ATP + CoA = acetyl-CoA + AMP + diphosphate. In terms of biological role, catalyzes the conversion of acetate into acetyl-CoA (AcCoA), an essential intermediate at the junction of anabolic and catabolic pathways. AcsA undergoes a two-step reaction. In the first half reaction, AcsA combines acetate with ATP to form acetyl-adenylate (AcAMP) intermediate. In the second half reaction, it can then transfer the acetyl group from AcAMP to the sulfhydryl group of CoA, forming the product AcCoA. The polypeptide is Acetyl-coenzyme A synthetase (Streptomyces avermitilis (strain ATCC 31267 / DSM 46492 / JCM 5070 / NBRC 14893 / NCIMB 12804 / NRRL 8165 / MA-4680)).